A 102-amino-acid polypeptide reads, in one-letter code: NADH-quinone oxidoreductase subunit K (102 aa).

3 consecutive transmembrane segments (helical) span residues 6-26, 30-50, and 62-82; these read LEHGLAVAGVLFCLGLVGLMV, ILFVLMSLEIMMNAAALAFVV, and VMFILVISLAAAEASIGLAIL.

This sequence belongs to the complex I subunit 4L family. In terms of assembly, NDH-1 is composed of 13 different subunits. Subunits NuoA, H, J, K, L, M, N constitute the membrane sector of the complex.

It localises to the cell inner membrane. The enzyme catalyses a quinone + NADH + 5 H(+)(in) = a quinol + NAD(+) + 4 H(+)(out). NDH-1 shuttles electrons from NADH, via FMN and iron-sulfur (Fe-S) centers, to quinones in the respiratory chain. The immediate electron acceptor for the enzyme in this species is believed to be ubiquinone. Couples the redox reaction to proton translocation (for every two electrons transferred, four hydrogen ions are translocated across the cytoplasmic membrane), and thus conserves the redox energy in a proton gradient. This is NADH-quinone oxidoreductase subunit K from Pseudomonas syringae pv. tomato (strain ATCC BAA-871 / DC3000).